Consider the following 475-residue polypeptide: MTEQFESTSFPSDIPAVNEESKLSAEETFKSLSEILAENSTLPVGISSIRVTGAHHTRPSFIRKVLKTCLDTSKPAKSRSLLETLNAIQETTGNLMAFNVYETANIKIDRASSSVSGDDDLDVTIQVKEKPRLYVETGTDVGNVEGNVHANVLARNVFGGAELLSGNVSYGTRNRSTMSVNFETPVNADPKTRLRFNGHSNLRDNKSISSHDLLTKGITLSLQHQDLWSGEHLLSQNLLWRQVTHLTEYASPSVRLEAGDSLKQSLSYTYTRDTRDHLMIPTKGDYVRQTLELAGFGFLPGDASFLKSEFWGQKAVALNSSRSVSLSLSARIGALHSLNKKQVSLCDRFMLGGSTSLRGFSEDRIGPKDGRDSLGGTAYMAFSMSLLFPLPKVDASKPFRLQLFANAGGLSNLTSPNPCGTYKSILSKPCISTGLGLVYATPAARFELNFTLPIATTEKDIGRKGLQFGAGIDFM.

The POTRA domain maps to 44–130; it reads VGISSIRVTG…LDVTIQVKEK (87 aa).

It belongs to the SAM50/omp85 family. Associates with the mitochondrial contact site and cristae organizing system (MICOS) complex (also known as MINOS or MitOS complex).

It localises to the mitochondrion outer membrane. Its function is as follows. May be required for the assembly pathway of mitochondrial outer membrane proteins. This Schizosaccharomyces pombe (strain 972 / ATCC 24843) (Fission yeast) protein is SAM50-like protein SPAC17C9.06.